Reading from the N-terminus, the 242-residue chain is Flavin prenyltransferase PAD1, mitochondrial (242 aa).

The transit peptide at 1–58 (MLLFPRRTNIAFFKTTGIFANFPLLGRTITTSPSFLTHKLSKEVTRASTSPPRPKRIV) directs the protein to the mitochondrion. FMN-binding positions include 63–65 (GAT), serine 89, 140–143 (SMKS), and arginine 175. Dimethylallyl phosphate-binding residues include tyrosine 205 and arginine 221.

It belongs to the UbiX/PAD1 family. As to quaternary structure, oligomer.

It is found in the mitochondrion. The enzyme catalyses dimethylallyl phosphate + FMNH2 = prenylated FMNH2 + phosphate. Functionally, flavin prenyltransferase that catalyzes the synthesis of the prenylated FMN cofactor (prenyl-FMN) for the ferulic acid decarboxylase FDC1/ubiD. The prenyltransferase is metal-independent and links a dimethylallyl moiety from dimethylallyl monophosphate (DMAP) to the flavin N5 and C6 atoms of FMN. Involved in the decarboxylation of phenylacrylic acids like ferulic acid, p-coumaric acid or cinnamic acid, producing the corresponding vinyl derivatives which play the role of aroma metabolites. Also involved in the degradation of the food preservative sorbic acid (2,4-hexadienoic acid) to a volatile hydrocarbon, 1,3-pentadiene. Not essential for ubiquinone synthesis. Can rescue Q biosynthesis in E.coli strains lacking UbiX. Has mRNA binding activity. The polypeptide is Flavin prenyltransferase PAD1, mitochondrial (Saccharomyces cerevisiae (strain ATCC 204508 / S288c) (Baker's yeast)).